The primary structure comprises 687 residues: Glycine--tRNA ligase beta subunit (687 aa).

The protein belongs to the class-II aminoacyl-tRNA synthetase family. In terms of assembly, tetramer of two alpha and two beta subunits.

It localises to the cytoplasm. It carries out the reaction tRNA(Gly) + glycine + ATP = glycyl-tRNA(Gly) + AMP + diphosphate. This chain is Glycine--tRNA ligase beta subunit, found in Geotalea daltonii (strain DSM 22248 / JCM 15807 / FRC-32) (Geobacter daltonii).